Reading from the N-terminus, the 178-residue chain is Ribosomal RNA small subunit methyltransferase G (178 aa).

S-adenosyl-L-methionine contacts are provided by residues Gly54, Leu59, Leu105–Glu106, and Arg120.

This sequence belongs to the methyltransferase superfamily. RNA methyltransferase RsmG family.

The protein resides in the cytoplasm. It catalyses the reaction guanosine(527) in 16S rRNA + S-adenosyl-L-methionine = N(7)-methylguanosine(527) in 16S rRNA + S-adenosyl-L-homocysteine. Specifically methylates the N7 position of guanine in position 527 of 16S rRNA. In Helicobacter acinonychis (strain Sheeba), this protein is Ribosomal RNA small subunit methyltransferase G.